Here is a 544-residue protein sequence, read N- to C-terminus: Ceramide glucosyltransferase (544 aa).

At M1–Y15 the chain is on the lumenal side. The helical transmembrane segment at F16–L36 threads the bilayer. The Cytoplasmic portion of the chain corresponds to F37–E427. A short sequence motif (D1) is located at residue D109. Residue D171 is a short sequence motif, D2. A short sequence motif (D3) is located at residue D364. D364 acts as the Proton acceptor in catalysis. The (Q/R)XXRW signature appears at R404–W408. Residues S428–F448 traverse the membrane as a helical segment. The Lumenal segment spans residues N449–Y451. Residues W452–I472 traverse the membrane as a helical segment. The Cytoplasmic segment spans residues N473 to Q501. A helical membrane pass occupies residues W502–I522. The Lumenal portion of the chain corresponds to G523–M544.

Belongs to the glycosyltransferase 2 family.

It is found in the golgi apparatus membrane. It catalyses the reaction an N-acylsphing-4-enine + UDP-alpha-D-glucose = a beta-D-glucosyl-(1&lt;-&gt;1')-N-acylsphing-4-enine + UDP + H(+). It functions in the pathway lipid metabolism; sphingolipid metabolism. Catalyzes the final step in the biosynthesis of the membrane lipid glucosylceramide (GluCer), the transfer of glucose to ceramide. Glucosylceramides play important roles in growth, differentiation and pathogenicity. In Candida albicans (strain SC5314 / ATCC MYA-2876) (Yeast), this protein is Ceramide glucosyltransferase.